We begin with the raw amino-acid sequence, 232 residues long: Ornithine carbamoyltransferase (232 aa).

Carbamoyl phosphate is bound by residues Q15, R39, and 66–69 (HPTQ). Residues N99, D163, and 167-168 (SM) each bind L-ornithine. Carbamoyl phosphate contacts are provided by residues 204 to 207 (HCLP) and T232.

Belongs to the aspartate/ornithine carbamoyltransferase superfamily. OTCase family.

Its subcellular location is the cytoplasm. It carries out the reaction carbamoyl phosphate + L-ornithine = L-citrulline + phosphate + H(+). It participates in amino-acid biosynthesis; L-arginine biosynthesis; L-arginine from L-ornithine and carbamoyl phosphate: step 1/3. Functionally, reversibly catalyzes the transfer of the carbamoyl group from carbamoyl phosphate (CP) to the N(epsilon) atom of ornithine (ORN) to produce L-citrulline. The protein is Ornithine carbamoyltransferase (argF) of Neisseria flava.